Reading from the N-terminus, the 712-residue chain is Translation initiation factor eIF2B subunit epsilon (712 aa).

Positions Met-1–Asp-20 are disordered. 6 positions are modified to phosphoserine: Ser-478, Ser-481, Ser-507, Ser-525, Ser-538, and Ser-707. The 172-residue stretch at Glu-539–Glu-710 folds into the W2 domain.

This sequence belongs to the eIF-2B gamma/epsilon subunits family. In terms of assembly, component of the translation initiation factor 2B (eIF2B) complex which is a heterodecamer of two sets of five different subunits: alpha, beta, gamma, delta and epsilon. Subunits alpha, beta and delta comprise a regulatory subcomplex and subunits epsilon and gamma comprise a catalytic subcomplex. Within the complex, the hexameric regulatory complex resides at the center, with the two heterodimeric catalytic subcomplexes bound on opposite sides.

It localises to the cytoplasm. The protein resides in the cytosol. Functionally, acts as a catalytic component of the translation initiation factor 2B (eIF2B) complex, which catalyzes the exchange of GDP for GTP on eukaryotic initiation factor 2 (eIF2) and is regulated by phosphorylated eIF2. Its guanine nucleotide exchange factor activity is repressed when bound to eIF2 complex phosphorylated on the alpha subunit, thereby limiting the amount of methionyl-initiator methionine tRNA available to the ribosome and consequently global translation is repressed. It activates the synthesis of GCN4 in yeast under amino acid starvation conditions by suppressing the inhibitory effects of multiple AUG codons present in the leader of GCN4 mRNA. It may promote either repression or activation of GCN4 expression depending on amino acid availability. GCD6 and GCD7 repress GCN4 expression at the translational level by ensuring that ribosomes which have translated UORF1 will reinitiate at UORF2, -3, or -4 and thus fail to reach the GCN4 start site. The protein is Translation initiation factor eIF2B subunit epsilon (GCD6) of Saccharomyces cerevisiae (strain ATCC 204508 / S288c) (Baker's yeast).